The chain runs to 289 residues: Complement C1q tumor necrosis factor-related protein 7 (289 aa).

Positions 1–16 (MIVLLYVTSLAICASG) are cleaved as a signal peptide. The tract at residues 36–134 (IPGLPGPPGP…GDRGDQGDPG (99 aa)) is disordered. The 102-residue stretch at 38–139 (GLPGPPGPPG…QGDPGLPGVC (102 aa)) folds into the Collagen-like domain. The span at 48–61 (ANGSPGPHGRIGLP) shows a compositional bias: low complexity. Over residues 63-76 (RDGRDGRKGEKGEK) the composition is skewed to basic and acidic residues. The segment covering 78-91 (TAGLKGKTGPLGLA) has biased composition (low complexity). The segment covering 93 to 102 (EKGDQGETGK) has biased composition (basic and acidic residues). The 137-residue stretch at 143–279 (SIVLKSAFSV…GFLLYVDTDY (137 aa)) folds into the C1q domain.

Its subcellular location is the secreted. This chain is Complement C1q tumor necrosis factor-related protein 7 (C1qtnf7), found in Mus musculus (Mouse).